The primary structure comprises 140 residues: Nucleoside diphosphate kinase (140 aa).

ATP contacts are provided by Lys-11, Phe-59, Arg-87, Thr-93, Arg-104, and Asn-114. His-117 serves as the catalytic Pros-phosphohistidine intermediate.

This sequence belongs to the NDK family. Mg(2+) serves as cofactor.

The protein localises to the cytoplasm. The enzyme catalyses a 2'-deoxyribonucleoside 5'-diphosphate + ATP = a 2'-deoxyribonucleoside 5'-triphosphate + ADP. It catalyses the reaction a ribonucleoside 5'-diphosphate + ATP = a ribonucleoside 5'-triphosphate + ADP. In terms of biological role, major role in the synthesis of nucleoside triphosphates other than ATP. The ATP gamma phosphate is transferred to the NDP beta phosphate via a ping-pong mechanism, using a phosphorylated active-site intermediate. This chain is Nucleoside diphosphate kinase, found in Metallosphaera sedula (strain ATCC 51363 / DSM 5348 / JCM 9185 / NBRC 15509 / TH2).